The following is a 431-amino-acid chain: 23S rRNA (uracil(1939)-C(5))-methyltransferase RlmD (431 aa).

The TRAM domain maps to 10–68; sequence RVTTRQIITVKVNDLDSFGQGVARHNGKALFIPGLLPEESAEVIITEDKKQFARARVSR. [4Fe-4S] cluster contacts are provided by Cys81, Cys87, Cys90, and Cys161. Residues Gln264, Phe293, Asn298, Glu314, Asn341, and Asp362 each coordinate S-adenosyl-L-methionine. Cys388 (nucleophile) is an active-site residue.

It belongs to the class I-like SAM-binding methyltransferase superfamily. RNA M5U methyltransferase family. RlmD subfamily.

The enzyme catalyses uridine(1939) in 23S rRNA + S-adenosyl-L-methionine = 5-methyluridine(1939) in 23S rRNA + S-adenosyl-L-homocysteine + H(+). Catalyzes the formation of 5-methyl-uridine at position 1939 (m5U1939) in 23S rRNA. The chain is 23S rRNA (uracil(1939)-C(5))-methyltransferase RlmD from Salmonella typhimurium (strain LT2 / SGSC1412 / ATCC 700720).